We begin with the raw amino-acid sequence, 476 residues long: NADH-quinone oxidoreductase subunit N (476 aa).

14 consecutive transmembrane segments (helical) span residues 5 to 25 (LALIWPELILTIGGLITLMLG), 38 to 58 (LSALLTLAAAAAAAIALFGVE), 70 to 90 (AFGGFAKLLIYAASFICILVA), 97 to 117 (GMRAEYPTLILFAALGMGIMA), 122 to 142 (LMTLYVGLELNSLAAYVLASF), 157 to 177 (FVLGALASGMLLYGISLLYGF), 196 to 218 (IGLIFGIVFVLSGLGFKISAVPF), 231 to 253 (TPVTTFFASAPKVAAMALMARIV), 264 to 284 (WQQIVIFLALASIILGAVGAI), 292 to 312 (LLAYSSINNVGFMLIGLAAGT), 318 to 338 (GVLTYLLVYLVTTLGAFLVVL), 364 to 384 (LAAAMSVFLFSLAGIPPLFGF), 401 to 421 (PLAVAGIVASVIGAFYYIAII), and 445 to 465 (IVAASALWLLAVGYLFIPALA).

Belongs to the complex I subunit 2 family. As to quaternary structure, NDH-1 is composed of 14 different subunits. Subunits NuoA, H, J, K, L, M, N constitute the membrane sector of the complex.

It localises to the cell inner membrane. It carries out the reaction a quinone + NADH + 5 H(+)(in) = a quinol + NAD(+) + 4 H(+)(out). Functionally, NDH-1 shuttles electrons from NADH, via FMN and iron-sulfur (Fe-S) centers, to quinones in the respiratory chain. The immediate electron acceptor for the enzyme in this species is believed to be ubiquinone. Couples the redox reaction to proton translocation (for every two electrons transferred, four hydrogen ions are translocated across the cytoplasmic membrane), and thus conserves the redox energy in a proton gradient. The polypeptide is NADH-quinone oxidoreductase subunit N (Sphingopyxis alaskensis (strain DSM 13593 / LMG 18877 / RB2256) (Sphingomonas alaskensis)).